The chain runs to 120 residues: Small ribosomal subunit protein bS16 (120 aa).

A disordered region spans residues Gly80–Ala120. Residues Leu81–Pro90 show a composition bias toward basic residues. Basic and acidic residues-rich tracts occupy residues His91–Glu101 and Ala109–Ala120.

The protein belongs to the bacterial ribosomal protein bS16 family.

The chain is Small ribosomal subunit protein bS16 from Bartonella bacilliformis (strain ATCC 35685 / KC583 / Herrer 020/F12,63).